The chain runs to 316 residues: Ribosomal RNA small subunit methyltransferase H (316 aa).

S-adenosyl-L-methionine contacts are provided by residues 35–37 (GGH), Asp-55, Phe-79, Asp-101, and Gln-108.

It belongs to the methyltransferase superfamily. RsmH family.

It localises to the cytoplasm. The catalysed reaction is cytidine(1402) in 16S rRNA + S-adenosyl-L-methionine = N(4)-methylcytidine(1402) in 16S rRNA + S-adenosyl-L-homocysteine + H(+). Functionally, specifically methylates the N4 position of cytidine in position 1402 (C1402) of 16S rRNA. The protein is Ribosomal RNA small subunit methyltransferase H of Aliivibrio fischeri (strain ATCC 700601 / ES114) (Vibrio fischeri).